Here is a 160-residue protein sequence, read N- to C-terminus: Cytochrome b6-f complex subunit 4 (160 aa).

3 helical membrane-spanning segments follow: residues 36–56 (LLYI…GLAV), 95–115 (LLGI…PFIE), and 131–151 (VVFL…CLPI).

The protein belongs to the cytochrome b family. PetD subfamily. As to quaternary structure, the 4 large subunits of the cytochrome b6-f complex are cytochrome b6, subunit IV (17 kDa polypeptide, PetD), cytochrome f and the Rieske protein, while the 4 small subunits are PetG, PetL, PetM and PetN. The complex functions as a dimer.

It localises to the cellular thylakoid membrane. Functionally, component of the cytochrome b6-f complex, which mediates electron transfer between photosystem II (PSII) and photosystem I (PSI), cyclic electron flow around PSI, and state transitions. This Prochlorococcus marinus (strain MIT 9515) protein is Cytochrome b6-f complex subunit 4.